The chain runs to 76 residues: Small ribosomal subunit protein bS18 (76 aa).

It belongs to the bacterial ribosomal protein bS18 family. As to quaternary structure, part of the 30S ribosomal subunit. Forms a tight heterodimer with protein bS6.

In terms of biological role, binds as a heterodimer with protein bS6 to the central domain of the 16S rRNA, where it helps stabilize the platform of the 30S subunit. The sequence is that of Small ribosomal subunit protein bS18 from Nitrosomonas eutropha (strain DSM 101675 / C91 / Nm57).